Here is a 254-residue protein sequence, read N- to C-terminus: 2-dehydro-3-deoxy-D-gluconate 5-dehydrogenase (254 aa).

The active-site Proton acceptor is the Tyr159.

The protein belongs to the short-chain dehydrogenases/reductases (SDR) family.

The enzyme catalyses 2-dehydro-3-deoxy-D-gluconate + NAD(+) = 3-deoxy-D-glycero-2,5-hexodiulosonate + NADH + H(+). Its function is as follows. Involved in the degradation of 3,6-anhydro-L-galactose, which is the major monomeric sugar of red macroalgae. Catalyzes the fourth step of the pathway, the reduction of 3-deoxy-D-glycero-2,5-hexodiulosonate (L-DDGal) to 2-dehydro-3-deoxy-D-gluconate (KDG). The sequence is that of 2-dehydro-3-deoxy-D-gluconate 5-dehydrogenase from Pseudoalteromonas atlantica (strain T6c / ATCC BAA-1087).